A 116-amino-acid polypeptide reads, in one-letter code: U16-barytoxin-Tl1a (116 aa).

An N-terminal signal peptide occupies residues 1 to 20 (MKTIIVFLSLLVLATKFGDA). The propeptide occupies 21–74 (KEGVNQEQKKEVTQNEFRVEYLNEMAAMSLLQQLEAIESALFEKEAGRNSRQKR). 3 disulfide bridges follow: C75/C90, C82/C95, and C89/C110.

Belongs to the neurotoxin 14 (magi-1) family. 06 (ICK-Trit) subfamily. In terms of tissue distribution, expressed by the venom gland.

The protein localises to the secreted. Functionally, ion channel inhibitor. The protein is U16-barytoxin-Tl1a of Trittame loki (Brush-footed trapdoor spider).